The sequence spans 311 residues: Endosome-associated-trafficking regulator 1 (311 aa).

Residues 167 to 278 (RGNAENGTKN…KSENERLRLG (112 aa)) are a coiled coil.

This sequence belongs to the ENTR1 family.

Its subcellular location is the cytoplasm. The protein resides in the early endosome. The protein localises to the endosome. It is found in the recycling endosome. It localises to the midbody. Its subcellular location is the cytoskeleton. The protein resides in the microtubule organizing center. The protein localises to the centrosome. It is found in the cilium basal body. Endosome-associated protein that plays a role in membrane receptor sorting, cytokinesis and ciliogenesis. The chain is Endosome-associated-trafficking regulator 1 from Danio rerio (Zebrafish).